We begin with the raw amino-acid sequence, 343 residues long: Interferon-inducible protein AIM2 (343 aa).

Positions 1–87 (MESKYKEILL…AKRLQEEKEK (87 aa)) constitute a Pyrin domain. The 200-residue stretch at 138-337 (MVAQQESIRE…SGVHSTIKVI (200 aa)) folds into the HIN-200 domain.

It belongs to the HIN-200 family. As to quaternary structure, self-associates; forms homooligomers in response to cytosolic double-stranded DNA (dsDNA) and the dsDNA seems to serve as oligomerization platform. Component of AIM2 inflammasome, which consists of a signal sensor component (AIM2), an adapter (PYCARD/ASC), which recruits an effector pro-inflammatory caspase (CASP1). Interacts (via pyrin domain) with PYCARD/ASC (via pyrin domain); interaction is direct. Component of the AIM2 PANoptosome complex, a multiprotein complex that drives inflammatory cell death (PANoptosis). Interacts with PYDC5; disrupts assembly of the AIM2 inflammasome complex. Interacts with EIF2AK2/PKR. Interacts with MAPRE1. Interacts with IFI16. Interacts with isoform IFI16-beta of IFI16; preventing the interaction between AIM2 and PYCARD/ASC. Interacts with RACK1; promoting association with PP2A phosphatase and dephosphorylation of AKT1. Interacts with TRIM11; promoting AIM2 recruitment to autophagosomes and autophagy-dependent degradation. (Microbial infection) Interacts with human herpesvirus 8 protein SOX/ORF37; this interaction inhibits AIM2 polymerization and subsequent inflammasome activation. Post-translationally, degraded via selective autophagy following interaction with TRIM11. Expressed in spleen, small intestine, peripheral blood leukocytes, and testis.

The protein localises to the cytoplasm. It is found in the inflammasome. Its subcellular location is the nucleus. Its activity is regulated as follows. Inactive in absence of double-stranded DNA (dsDNA). Homooligomerizes upon binding to dsDNA, dsDNA serving as an oligomerization platform. AIM2 requires large dsDNA to generate a structural template that couples dsDNA ligand-binding and homooligomerization. Homooligomerization is followed by recruitment of PYCARD/ASC to initiate speck formation (nucleation). AIM2 and PYCARD/ASC homooligomer filaments assemble bidirectionally and the recognition between AIM2 and PYCARD/ASC oligomers occurs in a head-to-tail manner. Clustered PYCARD/ASC nucleates the formation of CASP1 filaments through the interaction of their respective CARD domains, acting as a platform for CASP1 polymerization and activation. Active CASP1 then specifically processes protein precursors, such as gasdermin-D (GSDMD), IL1B and IL18, leading to the release of mature cytokines in the extracellular milieu or pyroptosis, depending on cell type. AIM2 can be activated in response to events that cause genomic DNA (HIV protease inhibitor nelfinavir) or mitochondrial DNA release in the cytoplasm (such as Perfluoroalkyl substance pollutants or cholesterol overload). Activation of the AIM2 inflammasome is inhibited by isoform IFI16-beta of IFI16, which prevents the interaction between AIM2 and PYCARD/ASC. Activation of the AIM2 inflammasome is inhibited by TRIM11, which promotes autophagy-dependent degradation of AIM2. Functionally, sensor component of the AIM2 inflammasome, which mediates inflammasome activation in response to the presence of double-stranded DNA (dsDNA) in the cytosol, leading to subsequent pyroptosis. Inflammasomes are supramolecular complexes that assemble in the cytosol in response to pathogens and other damage-associated signals and play critical roles in innate immunity and inflammation. Acts as a recognition receptor (PRR): specifically recognizes and binds dsDNA in the cytosol, and mediates the formation of the inflammasome polymeric complex composed of AIM2, CASP1 and PYCARD/ASC. Recruitment of pro-caspase-1 (proCASP1) to the AIM2 inflammasome promotes caspase-1 (CASP1) activation, which subsequently cleaves and activates inflammatory cytokines IL1B and IL18 and gasdermin-D (GSDMD), promoting cytokine secretion. In some cells, CASP1 activation mediates cleavage and activation of GSDMD, triggering pyroptosis without promoting cytokine secretion. Detects cytosolic dsDNA of viral and bacterial origin in a non-sequence-specific manner. Involved in the DNA damage response caused by acute ionizing radiation by mediating pyroptosis of intestinal epithelial cells and bone marrow cells in response to double-strand DNA breaks. Mechanistically, AIM2 senses DNA damage in the nucleus to mediate inflammasome assembly and inflammatory cell death. Also acts as a regulator of neurodevelopment via its role in the DNA damage response: acts by promoting neural cell death in response to DNA damage in the developing brain, thereby purging genetically compromised cells of the central nervous system. Pyroptosis mediated by the AIM2 inflammasome in response to DNA damage is dependent on GSDMD without involving IL1B and IL18 cytokine secretion. Also acts as a mediator of pyroptosis, necroptosis and apoptosis (PANoptosis), an integral part of host defense against pathogens, in response to bacterial infection. Can also trigger PYCARD/ASC-dependent, caspase-1-independent cell death that involves caspase-8 (CASP8). In terms of biological role, also acts as a tumor suppressor independently of its role in inflammatory response. Able to suppress overt cell proliferation in enterocytes: restricts stem cell proliferation in the intestinal mucosa in an inflammasome-independent manner, contributing to a decrease in the likelihood of colorectal cancer development. AIM2 suppresses cell proliferation by inhibiting phosphorylation of AKT1 at 'Ser-473', preventing AKT1 activation and AKT-mTOR signaling pathway. Inhibits AKT1 phosphorylation both by inhibiting the activity of PRKDC/DNA-PK kinase and promoting dephosphorylation by PP2A phosphatase. Also acts as a key regulator of regulatory T-cells (Treg) homeostasis by promoting their stability: acts by preventing AKT1 activation. Its role in Treg homeostasis is important to restain autoimmune diseases. The polypeptide is Interferon-inducible protein AIM2 (Homo sapiens (Human)).